The primary structure comprises 349 residues: MDLADLVKDVKRELSFSELKGKRVSIDGYNALYQFLAAIRQPDGTPLMDSQGRVTSHLSGLFYRTINILEEGVIPIYVFDGKPPEQKSEELERRRKAKEEAERKLERAKSEGKIEELRKYSQAILRLSNIMVEESKKLLRAMGIPIVQAPSEGEAEAAYLNKLGLSWAAASQDYDAILFGAKRLVRNLTITGKRKLPNKDVYVEIKPELIETEILLKKLGITREQLIDIGILIGTDYNPDGIRGIGPERALKIIKKYGKIEKAMEYGEISKKDINFNIDEIRGLFLNPQVVKPEEALDLNEPNGEDIINILVYEHNFSEERVKNGIERLTKAIKEAKGASRQTGLDRWF.

The segment at 1–98 is N-domain; sequence MDLADLVKDV…EELERRRKAK (98 aa). Residues Asp-27, Asp-80, Glu-152, Glu-154, Asp-173, Asp-175, and Asp-236 each coordinate Mg(2+). The I-domain stretch occupies residues 116-258; that stretch reads ELRKYSQAIL…RALKIIKKYG (143 aa). The tract at residues 341–349 is interaction with PCNA; it reads RQTGLDRWF.

The protein belongs to the XPG/RAD2 endonuclease family. FEN1 subfamily. As to quaternary structure, interacts with PCNA via subunit PCNA1. Requires Mg(2+) as cofactor.

With respect to regulation, heterotrimeric PCNA stimulates the nuclease activity without altering cleavage specificity. Its function is as follows. Structure-specific nuclease with 5'-flap endonuclease and 5'-3' exonuclease activities involved in DNA replication and repair. During DNA replication, cleaves the 5'-overhanging flap structure that is generated by displacement synthesis when DNA polymerase encounters the 5'-end of a downstream Okazaki fragment. Binds the unpaired 3'-DNA end and kinks the DNA to facilitate 5' cleavage specificity. Cleaves one nucleotide into the double-stranded DNA from the junction in flap DNA, leaving a nick for ligation. Also involved in the base excision repair (BER) pathway. Acts as a genome stabilization factor that prevents flaps from equilibrating into structures that lead to duplications and deletions. Also possesses 5'-3' exonuclease activity on nicked or gapped double-stranded DNA. DNA polymerase I, DNA ligase and the flap endonuclease may be constitutively associated with the PCNA heterotrimer forming a scanning complex able to couple DNA synthesis and Okazaki fragment maturation. The sequence is that of Flap endonuclease 1 from Saccharolobus solfataricus (strain ATCC 35092 / DSM 1617 / JCM 11322 / P2) (Sulfolobus solfataricus).